The sequence spans 129 residues: Small ribosomal subunit protein uS11 (129 aa).

It belongs to the universal ribosomal protein uS11 family. In terms of assembly, part of the 30S ribosomal subunit. Interacts with proteins S7 and S18. Binds to IF-3.

Its function is as follows. Located on the platform of the 30S subunit, it bridges several disparate RNA helices of the 16S rRNA. Forms part of the Shine-Dalgarno cleft in the 70S ribosome. The sequence is that of Small ribosomal subunit protein uS11 from Mannheimia succiniciproducens (strain KCTC 0769BP / MBEL55E).